The primary structure comprises 305 residues: 4-diphosphocytidyl-2-C-methyl-D-erythritol kinase (305 aa).

Residue lysine 18 is part of the active site. 103–113 (PYGAGLGGGSS) is a binding site for ATP. Aspartate 145 is an active-site residue.

The protein belongs to the GHMP kinase family. IspE subfamily.

It carries out the reaction 4-CDP-2-C-methyl-D-erythritol + ATP = 4-CDP-2-C-methyl-D-erythritol 2-phosphate + ADP + H(+). Its pathway is isoprenoid biosynthesis; isopentenyl diphosphate biosynthesis via DXP pathway; isopentenyl diphosphate from 1-deoxy-D-xylulose 5-phosphate: step 3/6. Its function is as follows. Catalyzes the phosphorylation of the position 2 hydroxy group of 4-diphosphocytidyl-2C-methyl-D-erythritol. The polypeptide is 4-diphosphocytidyl-2-C-methyl-D-erythritol kinase (Lawsonia intracellularis (strain PHE/MN1-00)).